We begin with the raw amino-acid sequence, 396 residues long: Protein NDRG1-B (396 aa).

Positions 326–396 (RSRTGSAASS…NTPKSMEVSC (71 aa)) are disordered. Over residues 327-340 (SRTGSAASSSSQDG) the composition is skewed to low complexity. 4 tandem repeats follow at residues 340 to 349 (GNRSRSHTNE), 350 to 359 (GSRSRSQTGD), 360 to 369 (GNRSRAHTGD), and 370 to 379 (GNRSRSHTDT). The tract at residues 340 to 379 (GNRSRSHTNEGSRSRSQTGDGNRSRAHTGDGNRSRSHTDT) is 4 X 10 AA tandem repeats of G-[NS]-R-S-R-[AS]-[HQ]-T-[DGN]-[DET]. A compositionally biased stretch (basic and acidic residues) spans 366–377 (HTGDGNRSRSHT). Residues 378–390 (DTNNVNSDHNTPK) are compositionally biased toward polar residues.

Belongs to the NDRG family.

Its function is as follows. May be involved in pronephros development, after specification of the pronephros. In Xenopus laevis (African clawed frog), this protein is Protein NDRG1-B (ndrg1-b).